The chain runs to 401 residues: 3-hydroxyisobutyryl-CoA hydrolase-like protein 1, mitochondrial (401 aa).

The transit peptide at 1 to 26 directs the protein to the mitochondrion; that stretch reads MHNAKGLLGRIVRDKLWRFGYRRSLC.

Belongs to the enoyl-CoA hydratase/isomerase family.

It localises to the mitochondrion. The protein is 3-hydroxyisobutyryl-CoA hydrolase-like protein 1, mitochondrial of Arabidopsis thaliana (Mouse-ear cress).